The chain runs to 60 residues: Truncated protein A35 homolog (60 aa).

It belongs to the chordopoxvirinae A35 protein family.

This Variola virus (isolate Human/India/Ind3/1967) (VARV) protein is Truncated protein A35 homolog (A38R).